The following is a 142-amino-acid chain: Large ribosomal subunit protein uL16 (142 aa).

It belongs to the universal ribosomal protein uL16 family. As to quaternary structure, part of the 50S ribosomal subunit.

Binds 23S rRNA and is also seen to make contacts with the A and possibly P site tRNAs. The sequence is that of Large ribosomal subunit protein uL16 from Thermosipho africanus (strain TCF52B).